The chain runs to 261 residues: NAD(P)H-quinone oxidoreductase subunit K, chloroplastic (261 aa).

4 residues coordinate [4Fe-4S] cluster: C43, C44, C108, and C139.

Belongs to the complex I 20 kDa subunit family. NDH is composed of at least 16 different subunits, 5 of which are encoded in the nucleus. [4Fe-4S] cluster is required as a cofactor.

Its subcellular location is the plastid. The protein resides in the chloroplast thylakoid membrane. The catalysed reaction is a plastoquinone + NADH + (n+1) H(+)(in) = a plastoquinol + NAD(+) + n H(+)(out). It carries out the reaction a plastoquinone + NADPH + (n+1) H(+)(in) = a plastoquinol + NADP(+) + n H(+)(out). Its function is as follows. NDH shuttles electrons from NAD(P)H:plastoquinone, via FMN and iron-sulfur (Fe-S) centers, to quinones in the photosynthetic chain and possibly in a chloroplast respiratory chain. The immediate electron acceptor for the enzyme in this species is believed to be plastoquinone. Couples the redox reaction to proton translocation, and thus conserves the redox energy in a proton gradient. This is NAD(P)H-quinone oxidoreductase subunit K, chloroplastic from Cycas taitungensis (Prince sago).